A 387-amino-acid chain; its full sequence is Succinate--CoA ligase [ADP-forming] subunit beta (387 aa).

Positions 9–243 (KEILSTYGIP…YSQLDPLEIT (235 aa)) constitute an ATP-grasp domain. Residues lysine 45, 52 to 54 (GRG), glutamate 98, valine 101, and glutamate 106 contribute to the ATP site. Positions 198 and 212 each coordinate Mg(2+). Substrate contacts are provided by residues asparagine 263 and 320–322 (GIM).

This sequence belongs to the succinate/malate CoA ligase beta subunit family. Heterotetramer of two alpha and two beta subunits. It depends on Mg(2+) as a cofactor.

The enzyme catalyses succinate + ATP + CoA = succinyl-CoA + ADP + phosphate. It catalyses the reaction GTP + succinate + CoA = succinyl-CoA + GDP + phosphate. Its pathway is carbohydrate metabolism; tricarboxylic acid cycle; succinate from succinyl-CoA (ligase route): step 1/1. Its function is as follows. Succinyl-CoA synthetase functions in the citric acid cycle (TCA), coupling the hydrolysis of succinyl-CoA to the synthesis of either ATP or GTP and thus represents the only step of substrate-level phosphorylation in the TCA. The beta subunit provides nucleotide specificity of the enzyme and binds the substrate succinate, while the binding sites for coenzyme A and phosphate are found in the alpha subunit. The polypeptide is Succinate--CoA ligase [ADP-forming] subunit beta (Trichlorobacter lovleyi (strain ATCC BAA-1151 / DSM 17278 / SZ) (Geobacter lovleyi)).